Consider the following 1350-residue polypeptide: Probable serine/threonine-protein kinase irlE (1350 aa).

Asparagine 37 carries N-linked (GlcNAc...) asparagine glycosylation. Residues 149-169 traverse the membrane as a helical segment; the sequence is FWEILASCYGTISFIKFFNIF. Positions 731–802 form a coiled coil; sequence EAELKEKFEI…NIQQNYENQH (72 aa). Basic residues predominate over residues 761–771; sequence LKKKNKLKKQK. 2 disordered regions span residues 761–795 and 807–864; these read LKKK…QNIQ and RKFN…TTNS. Residues 772-795 are compositionally biased toward low complexity; it reads NQQQQQQAKQQAQQQKQQHQQNIQ. Polar residues predominate over residues 809-823; the sequence is FNQQTKGRPISPSSI. Residues 824–864 show a composition bias toward low complexity; the sequence is QNQNLNPTLLQNQNQTSNPTPNLESTKKATPTTTTTTTTNS. One can recognise a Protein kinase domain in the interval 903 to 1166; sequence KKESNILGRG…LSSVLKHPLF (264 aa). ATP-binding positions include 909–917 and lysine 932; that span reads LGRGSNGTL. Aspartate 1034 functions as the Proton acceptor in the catalytic mechanism. The KEN domain occupies 1169–1346; the sequence is SLKKIKFLES…KNSIHFSNDT (178 aa).

It belongs to the protein kinase superfamily. Ser/Thr protein kinase family.

It is found in the membrane. The enzyme catalyses L-seryl-[protein] + ATP = O-phospho-L-seryl-[protein] + ADP + H(+). It catalyses the reaction L-threonyl-[protein] + ATP = O-phospho-L-threonyl-[protein] + ADP + H(+). In Dictyostelium discoideum (Social amoeba), this protein is Probable serine/threonine-protein kinase irlE (irlE).